The chain runs to 134 residues: Holo-[acyl-carrier-protein] synthase (134 aa).

Aspartate 8 and glutamate 57 together coordinate Mg(2+).

Belongs to the P-Pant transferase superfamily. AcpS family. It depends on Mg(2+) as a cofactor.

The protein localises to the cytoplasm. The catalysed reaction is apo-[ACP] + CoA = holo-[ACP] + adenosine 3',5'-bisphosphate + H(+). In terms of biological role, transfers the 4'-phosphopantetheine moiety from coenzyme A to a Ser of acyl-carrier-protein. The chain is Holo-[acyl-carrier-protein] synthase from Agrobacterium fabrum (strain C58 / ATCC 33970) (Agrobacterium tumefaciens (strain C58)).